The sequence spans 402 residues: UDP-glucose 6-dehydrogenase (402 aa).

NAD(+) contacts are provided by residues 2–19 (KIAV…GVLL), V11, D29, K34, T83, T118, and E145. Residues 141 to 145 (EFLRE), K204, N208, 249 to 253 (YNNPS), and G257 contribute to the substrate site. An NAD(+)-binding site is contributed by Y259. C260 (nucleophile) is an active-site residue. K263 contributes to the NAD(+) binding site. K320 provides a ligand contact to substrate. R327 serves as a coordination point for NAD(+).

It belongs to the UDP-glucose/GDP-mannose dehydrogenase family.

The catalysed reaction is UDP-alpha-D-glucose + 2 NAD(+) + H2O = UDP-alpha-D-glucuronate + 2 NADH + 3 H(+). Its pathway is nucleotide-sugar biosynthesis; UDP-alpha-D-glucuronate biosynthesis; UDP-alpha-D-glucuronate from UDP-alpha-D-glucose: step 1/1. In terms of biological role, catalyzes the formation of UDP-glucuronic acid which is required for capsular hyaluronic acid synthesis. The protein is UDP-glucose 6-dehydrogenase (hasB) of Streptococcus pyogenes serotype M18 (strain MGAS8232).